The sequence spans 397 residues: Acetate kinase 2 (397 aa).

Asparagine 8 lines the Mg(2+) pocket. Position 15 (lysine 15) interacts with ATP. A substrate-binding site is contributed by arginine 89. Aspartate 146 functions as the Proton donor/acceptor in the catalytic mechanism. Residues 206–210, 281–283, and 329–333 each bind ATP; these read HLGNG, DLR, and GIGEN. Glutamate 382 is a Mg(2+) binding site.

It belongs to the acetokinase family. In terms of assembly, homodimer. The cofactor is Mg(2+). Requires Mn(2+) as cofactor.

It is found in the cytoplasm. The enzyme catalyses acetate + ATP = acetyl phosphate + ADP. Its pathway is metabolic intermediate biosynthesis; acetyl-CoA biosynthesis; acetyl-CoA from acetate: step 1/2. Functionally, catalyzes the formation of acetyl phosphate from acetate and ATP. Can also catalyze the reverse reaction. This Listeria monocytogenes serotype 4b (strain F2365) protein is Acetate kinase 2.